We begin with the raw amino-acid sequence, 406 residues long: Histone-lysine N-methyltransferase SUV39H2 (406 aa).

In terms of domain architecture, Chromo spans 43–101 (YEVEYLCDYRIEKGVEKFFVKWKGWPESCNTWEPTRNLKCPTLLKQFYSDLYNYFCALK). The 59-residue stretch at 185 to 243 (VGCDCSDCFKGKCCPTEAGVLFAYNEHRQIKIPPGRPIYECNSRCKCGPDCPNRVVQKG) folds into the Pre-SET domain. Positions 187, 189, 192, 197, 198, 225, 229, 231, and 235 each coordinate Zn(2+). The SET domain maps to 246–369 (YSLCIFRTDN…AGEELTFDYQ (124 aa)). S-adenosyl-L-methionine-binding positions include 257–259 (RGW), Tyr300, and 326–327 (NH). Cys329, Cys394, Cys396, and Cys401 together coordinate Zn(2+). A Post-SET domain is found at 390–406 (VRIACKCGAATCRGYLN).

The protein belongs to the class V-like SAM-binding methyltransferase superfamily. Histone-lysine methyltransferase family. Suvar3-9 subfamily.

The protein localises to the nucleus. It is found in the chromosome. Its subcellular location is the centromere. The catalysed reaction is L-lysyl(9)-[histone H3] + 3 S-adenosyl-L-methionine = N(6),N(6),N(6)-trimethyl-L-lysyl(9)-[histone H3] + 3 S-adenosyl-L-homocysteine + 3 H(+). Functionally, histone methyltransferase that specifically trimethylates 'Lys-9' of histone H3 using monomethylated H3 'Lys-9' as substrate. H3 'Lys-9' trimethylation represents a specific tag for epigenetic transcriptional repression by recruiting HP1 (CBX1, CBX3 and/or CBX5) proteins to methylated histones. Mainly functions in heterochromatin regions, thereby playing a central role in the establishment of constitutive heterochromatin at pericentric and telomere regions. H3 'Lys-9' trimethylation is also required to direct DNA methylation at pericentric repeats. SUV39H1 is targeted to histone H3 via its interaction with RB1 and is involved in many processes. In Xenopus tropicalis (Western clawed frog), this protein is Histone-lysine N-methyltransferase SUV39H2 (suv39h2).